An 885-amino-acid polypeptide reads, in one-letter code: DNA mismatch repair protein MutS (885 aa).

626–633 (GPNMGGKS) contributes to the ATP binding site.

The protein belongs to the DNA mismatch repair MutS family.

In terms of biological role, this protein is involved in the repair of mismatches in DNA. It is possible that it carries out the mismatch recognition step. This protein has a weak ATPase activity. This is DNA mismatch repair protein MutS from Burkholderia lata (strain ATCC 17760 / DSM 23089 / LMG 22485 / NCIMB 9086 / R18194 / 383).